The primary structure comprises 903 residues: Chitin synthase 1 (903 aa).

Residues 1–154 (MDPRYGAQPQ…YQDQPQQGGG (154 aa)) are disordered. Polar residues predominate over residues 67 to 79 (DHLNLNAAQSVDN). Residue asparagine 79 is glycosylated (N-linked (GlcNAc...) asparagine). Residues 100-117 (YYNQPYEPRPQQQPYDQG) are compositionally biased toward low complexity. The segment covering 135–150 (HQPSDAPSEPYQDQPQ) has biased composition (polar residues). 9 consecutive transmembrane segments (helical) span residues 444 to 464 (SAFGFISVLPGAFSAYRYVAL), 543 to 563 (RWLNGSFFAAIYAIVHFLDFL), 573 to 593 (FAFFIEFIFNTINMIFAWFAI), 619 to 639 (ILGVVFTWLYGVFLITCFVLS), 654 to 674 (MCWFWAIIMIYLLFAAIFIAV), 700 to 720 (MLIISVMSTFGIWLIASLIML), 729 to 749 (LVQYMLLTPTFTNVLNVYAFC), 828 to 848 (GVVLIWMVSNFGLAALVLSSA), and 875 to 895 (IVLWSVAGLSAFKFIGAMWFL).

Belongs to the chitin synthase family. Class I subfamily.

The protein resides in the cell membrane. The enzyme catalyses [(1-&gt;4)-N-acetyl-beta-D-glucosaminyl](n) + UDP-N-acetyl-alpha-D-glucosamine = [(1-&gt;4)-N-acetyl-beta-D-glucosaminyl](n+1) + UDP + H(+). In terms of biological role, polymerizes chitin, a structural polymer of the cell wall and septum, by transferring the sugar moiety of UDP-GlcNAc to the non-reducing end of the growing chitin polymer. Plays an important role in nuclear sorting or distribution. The chain is Chitin synthase 1 from Fusarium oxysporum f. sp. lycopersici (strain 4287 / CBS 123668 / FGSC 9935 / NRRL 34936) (Fusarium vascular wilt of tomato).